Reading from the N-terminus, the 61-residue chain is Small ribosomal subunit protein uS14 (61 aa).

Zn(2+) contacts are provided by cysteine 24, cysteine 27, cysteine 40, and cysteine 43.

It belongs to the universal ribosomal protein uS14 family. Zinc-binding uS14 subfamily. In terms of assembly, part of the 30S ribosomal subunit. Contacts proteins S3 and S10. Zn(2+) serves as cofactor.

Binds 16S rRNA, required for the assembly of 30S particles and may also be responsible for determining the conformation of the 16S rRNA at the A site. In Nitratidesulfovibrio vulgaris (strain DSM 19637 / Miyazaki F) (Desulfovibrio vulgaris), this protein is Small ribosomal subunit protein uS14.